Reading from the N-terminus, the 206-residue chain is Small ribosomal subunit protein uS4 (206 aa).

Residues 15-46 (MGENIWGRPKSPVNKREYGPGQHGQRRKNKLS) are disordered. The S4 RNA-binding domain maps to 94 to 157 (RRLDAIVYRA…RQLAIVLEAT (64 aa)).

The protein belongs to the universal ribosomal protein uS4 family. Part of the 30S ribosomal subunit. Contacts protein S5. The interaction surface between S4 and S5 is involved in control of translational fidelity.

Its function is as follows. One of the primary rRNA binding proteins, it binds directly to 16S rRNA where it nucleates assembly of the body of the 30S subunit. In terms of biological role, with S5 and S12 plays an important role in translational accuracy. The protein is Small ribosomal subunit protein uS4 of Cereibacter sphaeroides (strain ATCC 17025 / ATH 2.4.3) (Rhodobacter sphaeroides).